Reading from the N-terminus, the 544-residue chain is Aspartokinase (544 aa).

In terms of domain architecture, ACT spans 463 to 535; sequence LVGKQMVNFI…SAIGDSSAVD (73 aa).

Belongs to the aspartokinase family.

It catalyses the reaction L-aspartate + ATP = 4-phospho-L-aspartate + ADP. It participates in amino-acid biosynthesis; L-methionine biosynthesis via de novo pathway; L-homoserine from L-aspartate: step 1/3. It functions in the pathway amino-acid biosynthesis; L-threonine biosynthesis; L-threonine from L-aspartate: step 1/5. Functionally, phosphorylates aspartate, the first step in the biosynthesis of amino acids that derive from aspartate (the aspartate family of amino acids), including methioinine and threonine, the latter of which is a precursor to isoleucine. In Candida albicans (strain SC5314 / ATCC MYA-2876) (Yeast), this protein is Aspartokinase.